A 403-amino-acid polypeptide reads, in one-letter code: Ribosomal RNA large subunit methyltransferase I (403 aa).

The PUA domain occupies 9–86; the sequence is YPRLVLSKGR…KAESIDIAFF (78 aa).

This sequence belongs to the methyltransferase superfamily. RlmI family.

The protein resides in the cytoplasm. The enzyme catalyses cytidine(1962) in 23S rRNA + S-adenosyl-L-methionine = 5-methylcytidine(1962) in 23S rRNA + S-adenosyl-L-homocysteine + H(+). Functionally, specifically methylates the cytosine at position 1962 (m5C1962) of 23S rRNA. This chain is Ribosomal RNA large subunit methyltransferase I, found in Salmonella gallinarum (strain 287/91 / NCTC 13346).